The following is a 252-amino-acid chain: 3-dehydroquinate dehydratase (252 aa).

3-dehydroquinate is bound by residues serine 21, 46-48 (EWR), and arginine 82. Histidine 143 (proton donor/acceptor) is an active-site residue. Lysine 170 serves as the catalytic Schiff-base intermediate with substrate. Arginine 213, serine 232, and glutamine 236 together coordinate 3-dehydroquinate.

The protein belongs to the type-I 3-dehydroquinase family. Homodimer.

The enzyme catalyses 3-dehydroquinate = 3-dehydroshikimate + H2O. It participates in metabolic intermediate biosynthesis; chorismate biosynthesis; chorismate from D-erythrose 4-phosphate and phosphoenolpyruvate: step 3/7. Inhibited by (2R)-2-methyl-3-dehydroquinic acid. Involved in the third step of the chorismate pathway, which leads to the biosynthesis of aromatic amino acids. Catalyzes the cis-dehydration of 3-dehydroquinate (DHQ) and introduces the first double bond of the aromatic ring to yield 3-dehydroshikimate. The reaction involves the formation of an imine intermediate between the keto group of 3-dehydroquinate and the epsilon-amino group of a Lys-170 at the active site. This is 3-dehydroquinate dehydratase from Salmonella typhimurium (strain LT2 / SGSC1412 / ATCC 700720).